Here is a 91-residue protein sequence, read N- to C-terminus: Small ribosomal subunit protein uS19 (91 aa).

The protein belongs to the universal ribosomal protein uS19 family.

In terms of biological role, protein S19 forms a complex with S13 that binds strongly to the 16S ribosomal RNA. This chain is Small ribosomal subunit protein uS19, found in Pseudomonas paraeruginosa (strain DSM 24068 / PA7) (Pseudomonas aeruginosa (strain PA7)).